The primary structure comprises 184 residues: Photosystem I assembly protein Ycf4 (184 aa).

2 helical membrane-spanning segments follow: residues 21–43 (NFFW…SSSY) and 58–80 (VFIP…GFYL).

The protein belongs to the Ycf4 family.

The protein localises to the plastid. The protein resides in the chloroplast thylakoid membrane. In terms of biological role, seems to be required for the assembly of the photosystem I complex. The sequence is that of Photosystem I assembly protein Ycf4 from Psilotum nudum (Whisk fern).